A 181-amino-acid chain; its full sequence is Probable mitochondrial import inner membrane translocase subunit tim-17B.1 (181 aa).

The next 3 membrane-spanning stretches (helical) occupy residues 17 to 37, 61 to 81, and 109 to 129; these read IGSA…FGGY, GVQF…LVAI, and VMAG…GVGL. The tract at residues 137-181 is disordered; it reads AMMDPTQPPPEALDDPRSLGQKSQAEPGLDQTRPFGIPTGLPNLS.

The protein belongs to the Tim17/Tim22/Tim23 family.

The protein localises to the mitochondrion inner membrane. In terms of biological role, essential component of the TIM23 complex, a complex that mediates the translocation of transit peptide-containing proteins across the mitochondrial inner membrane. The sequence is that of Probable mitochondrial import inner membrane translocase subunit tim-17B.1 from Caenorhabditis elegans.